A 710-amino-acid polypeptide reads, in one-letter code: DNA topoisomerase 1 (710 aa).

Residues 1–22 (MPTSTKSKTKTTTKKKTTRKRV) are disordered. Residues 7–22 (SKTKTTTKKKTTRKRV) are compositionally biased toward basic residues. One can recognise a Toprim domain in the interval 26 to 136 (KNLVIVESPA…EKNRVVFNEI (111 aa)). Mg(2+)-binding residues include glutamate 32 and aspartate 105. The 423-residue stretch at 152-574 (DVDLVDAQQA…QFYKPFAKEL (423 aa)) folds into the Topo IA-type catalytic domain. The tract at residues 186 to 191 (SAGRVQ) is interaction with DNA. The active-site O-(5'-phospho-DNA)-tyrosine intermediate is the tyrosine 321. 2 consecutive C4-type zinc fingers follow at residues 595–621 (CDVCGSPMVIKLGRFGKFYACSNFPDC) and 635–663 (CPLCHEGNIIERKTKKNRIFYGCDRYPDC). Residues 676–702 (CPKSGHFLVEKKVRGGGKQVVCSNDEC) form a C4-type 3; atypical zinc finger.

It belongs to the type IA topoisomerase family. Monomer. Mg(2+) serves as cofactor.

It carries out the reaction ATP-independent breakage of single-stranded DNA, followed by passage and rejoining.. Functionally, releases the supercoiling and torsional tension of DNA, which is introduced during the DNA replication and transcription, by transiently cleaving and rejoining one strand of the DNA duplex. Introduces a single-strand break via transesterification at a target site in duplex DNA. The scissile phosphodiester is attacked by the catalytic tyrosine of the enzyme, resulting in the formation of a DNA-(5'-phosphotyrosyl)-enzyme intermediate and the expulsion of a 3'-OH DNA strand. The free DNA strand then undergoes passage around the unbroken strand, thus removing DNA supercoils. Finally, in the religation step, the DNA 3'-OH attacks the covalent intermediate to expel the active-site tyrosine and restore the DNA phosphodiester backbone. This is DNA topoisomerase 1 from Lactococcus lactis subsp. lactis (strain IL1403) (Streptococcus lactis).